Reading from the N-terminus, the 387-residue chain is Pepsin II-2/3 (387 aa).

The N-terminal stretch at 1–15 (MKWLLLLGLLALSEC) is a signal peptide. Positions 16–59 (IVHKVPLVRKKSLRKNLIEKGLLQDYLKTHTPNPATKYFPKETF) are cleaved as a propeptide — activation peptide. Residues 75–384 (YFGTISIGTP…DRANNQLGLA (310 aa)) enclose the Peptidase A1 domain. The active site involves aspartate 93. The cysteines at positions 106 and 111 are disulfide-linked. Serine 129 is modified (phosphoserine). Cysteine 267 and cysteine 271 are joined by a disulfide. Aspartate 276 is a catalytic residue. Cysteine 310 and cysteine 343 are disulfide-bonded.

Belongs to the peptidase A1 family.

Its subcellular location is the secreted. It catalyses the reaction Preferential cleavage: hydrophobic, preferably aromatic, residues in P1 and P1' positions. Cleaves 1-Phe-|-Val-2, 4-Gln-|-His-5, 13-Glu-|-Ala-14, 14-Ala-|-Leu-15, 15-Leu-|-Tyr-16, 16-Tyr-|-Leu-17, 23-Gly-|-Phe-24, 24-Phe-|-Phe-25 and 25-Phe-|-Tyr-26 bonds in the B chain of insulin.. Functionally, shows particularly broad specificity; although bonds involving phenylalanine and leucine are preferred, many others are also cleaved to some extent. In Oryctolagus cuniculus (Rabbit), this protein is Pepsin II-2/3.